Here is a 36-residue protein sequence, read N- to C-terminus: NAIFSKKNFETLSEAFSVFQTLKYLAILGGVTFLAG.

Belongs to the SWP1 family. Component of the oligosaccharyltransferase (OST) complex.

Its subcellular location is the endoplasmic reticulum. It is found in the endoplasmic reticulum membrane. Its pathway is protein modification; protein glycosylation. Its function is as follows. Subunit of the oligosaccharyl transferase (OST) complex that catalyzes the initial transfer of a defined glycan (Glc(3)Man(9)GlcNAc(2) in eukaryotes) from the lipid carrier dolichol-pyrophosphate to an asparagine residue within an Asn-X-Ser/Thr consensus motif in nascent polypeptide chains, the first step in protein N-glycosylation. N-glycosylation occurs cotranslationally and the complex associates with the Sec61 complex at the channel-forming translocon complex that mediates protein translocation across the endoplasmic reticulum (ER). All subunits are required for a maximal enzyme activity. The polypeptide is Dolichyl-diphosphooligosaccharide--protein glycosyltransferase subunit 2 (Gallus gallus (Chicken)).